A 314-amino-acid polypeptide reads, in one-letter code: Bis(5'-nucleosyl)-tetraphosphatase, symmetrical (314 aa).

Positions 267–314 (QVPGNPITHPPKTAQRPRQPRRRQRQRGGDQAQTGPAPTPASTGPAGG) are disordered. Over residues 297–314 (QAQTGPAPTPASTGPAGG) the composition is skewed to low complexity.

Belongs to the Ap4A hydrolase family.

The enzyme catalyses P(1),P(4)-bis(5'-adenosyl) tetraphosphate + H2O = 2 ADP + 2 H(+). Its function is as follows. Hydrolyzes diadenosine 5',5'''-P1,P4-tetraphosphate to yield ADP. The protein is Bis(5'-nucleosyl)-tetraphosphatase, symmetrical of Xanthomonas axonopodis pv. citri (strain 306).